A 1025-amino-acid polypeptide reads, in one-letter code: Dihydropyrimidine dehydrogenase [NADP(+)] (1025 aa).

The 4Fe-4S ferredoxin-type 1 domain occupies 69 to 100 (ERGALREAMRCLKCADAPCQKSCPTNLDIKSF). Positions 79, 82, 87, and 91 each coordinate [4Fe-4S] cluster. Residue Val129 coordinates FAD. Positions 130, 136, 140, and 156 each coordinate [4Fe-4S] cluster. FAD contacts are provided by residues 194 to 198 (GAGPA), 218 to 226 (EKQEYVGGI), Arg235, and Leu261. Residues 340 to 343 (AGDT), 364 to 365 (RK), and Arg371 each bind NADP(+). Lys384 is modified (N6-acetyllysine). Residues 437 to 439 (AFG) and 481 to 487 (DVVGIAN) contribute to the NADP(+) site. 480 to 489 (GDVVGIANTT) lines the FAD pocket. FMN-binding positions include Ser550 and 574 to 575 (KT). Residues Asn609 and 668–670 (NLS) contribute to the substrate site. Cys671 serves as the catalytic Proton acceptor. Position 709 (Lys709) interacts with FMN. 736–737 (NT) provides a ligand contact to substrate. FMN is bound by residues Gly767, 793 to 795 (TGG), and 816 to 817 (CS). 4Fe-4S ferredoxin-type domains follow at residues 944-976 (VVAV…FDPE) and 978-1007 (HLPT…MVSR). Residues Cys953, Cys956, Cys959, Cys963, Cys986, Cys989, Cys992, and Cys996 each contribute to the [4Fe-4S] cluster site.

It belongs to the dihydropyrimidine dehydrogenase family. Homodimer. FAD is required as a cofactor. Requires FMN as cofactor. The cofactor is [4Fe-4S] cluster.

The protein resides in the cytoplasm. It carries out the reaction 5,6-dihydrouracil + NADP(+) = uracil + NADPH + H(+). The enzyme catalyses 5,6-dihydrothymine + NADP(+) = thymine + NADPH + H(+). It participates in amino-acid biosynthesis; beta-alanine biosynthesis. With respect to regulation, inactivated by 5-iodouracil. In terms of biological role, involved in pyrimidine base degradation. Catalyzes the reduction of uracil and thymine. Also involved the degradation of the chemotherapeutic drug 5-fluorouracil. This Bos taurus (Bovine) protein is Dihydropyrimidine dehydrogenase [NADP(+)] (DPYD).